The primary structure comprises 359 residues: Cytoplasmic tRNA 2-thiolation protein 2 (359 aa).

It belongs to the CTU2/NCS2 family.

It localises to the cytoplasm. Its pathway is tRNA modification; 5-methoxycarbonylmethyl-2-thiouridine-tRNA biosynthesis. Functionally, plays a central role in 2-thiolation of mcm(5)S(2)U at tRNA wobble positions of tRNA(Lys), tRNA(Glu) and tRNA(Gln). May act by forming a heterodimer with NCS6 that ligates sulfur from thiocarboxylated URM1 onto the uridine of tRNAs at wobble position. Prior mcm(5) tRNA modification by the elongator complex is required for 2-thiolation. May also be involved in protein urmylation. This Ajellomyces capsulatus (strain NAm1 / WU24) (Darling's disease fungus) protein is Cytoplasmic tRNA 2-thiolation protein 2.